A 397-amino-acid polypeptide reads, in one-letter code: Methylthioribose kinase (397 aa).

Residues Asn44, Lys61, and 115–117 (EDL) each bind ATP. Residue Asp233 coordinates substrate. Residue 250–252 (DPE) participates in ATP binding. Residue Arg340 participates in substrate binding.

It belongs to the methylthioribose kinase family. As to quaternary structure, homodimer.

It carries out the reaction 5-(methylsulfanyl)-D-ribose + ATP = 5-(methylsulfanyl)-alpha-D-ribose 1-phosphate + ADP + H(+). It functions in the pathway amino-acid biosynthesis; L-methionine biosynthesis via salvage pathway; S-methyl-5-thio-alpha-D-ribose 1-phosphate from S-methyl-5'-thioadenosine (hydrolase route): step 2/2. Catalyzes the phosphorylation of methylthioribose into methylthioribose-1-phosphate. The polypeptide is Methylthioribose kinase (mtnK) (Bacillus subtilis (strain 168)).